The chain runs to 326 residues: MRLHKRLKQNKSLLPSNSTILLAISGGQDSMALLKLIIDLKRLHKWQVEIWHGNHQWHSKSEKTEEELKLWCLKNQISFHSNKADKKEVANEEKARDWRYKNLIMKAKFLSSKNIHFPCTRILTGHTATDRAETVIMNLARGTDLTGLTTLKEQRTIESNIDLTRPLLIFNRNETLEICKDFNLPIWIDPSNENINLTRNKIRKEILPILNSIYKGADSRIASVANRLESYNEDQKLFAKIAIQFCQGEKINSLSRIKLFGLTNSIRQIILSNWLKTMGVKRITALQIEEINTKVSQRKPPGSIHLHGDFLIRWNKEAIYISNKTN.

Residue 25–30 (SGGQDS) coordinates ATP.

The protein belongs to the tRNA(Ile)-lysidine synthase family.

It is found in the cytoplasm. The enzyme catalyses cytidine(34) in tRNA(Ile2) + L-lysine + ATP = lysidine(34) in tRNA(Ile2) + AMP + diphosphate + H(+). Its function is as follows. Ligates lysine onto the cytidine present at position 34 of the AUA codon-specific tRNA(Ile) that contains the anticodon CAU, in an ATP-dependent manner. Cytidine is converted to lysidine, thus changing the amino acid specificity of the tRNA from methionine to isoleucine. This chain is tRNA(Ile)-lysidine synthase, found in Prochlorococcus marinus (strain NATL1A).